Reading from the N-terminus, the 98-residue chain is uncharacterized protein (98 aa).

This is an uncharacterized protein from Homo sapiens (Human).